Consider the following 111-residue polypeptide: UPF0375 protein ule-4 (111 aa).

An N-terminal signal peptide occupies residues 1 to 18 (MNSRLVLLLAVSVALVSA). 2 N-linked (GlcNAc...) asparagine glycosylation sites follow: asparagine 23 and asparagine 58.

It belongs to the UPF0375 family.

The protein localises to the secreted. This chain is UPF0375 protein ule-4, found in Caenorhabditis elegans.